The primary structure comprises 156 residues: Small ribosomal subunit protein uS7 (156 aa).

This sequence belongs to the universal ribosomal protein uS7 family. Part of the 30S ribosomal subunit. Contacts proteins S9 and S11.

Functionally, one of the primary rRNA binding proteins, it binds directly to 16S rRNA where it nucleates assembly of the head domain of the 30S subunit. Is located at the subunit interface close to the decoding center, probably blocks exit of the E-site tRNA. The protein is Small ribosomal subunit protein uS7 of Agrobacterium fabrum (strain C58 / ATCC 33970) (Agrobacterium tumefaciens (strain C58)).